Reading from the N-terminus, the 280-residue chain is Urease accessory protein UreD (280 aa).

This sequence belongs to the UreD family. In terms of assembly, ureD, UreF and UreG form a complex that acts as a GTP-hydrolysis-dependent molecular chaperone, activating the urease apoprotein by helping to assemble the nickel containing metallocenter of UreC. The UreE protein probably delivers the nickel.

Its subcellular location is the cytoplasm. In terms of biological role, required for maturation of urease via the functional incorporation of the urease nickel metallocenter. This chain is Urease accessory protein UreD, found in Staphylococcus saprophyticus subsp. saprophyticus (strain ATCC 15305 / DSM 20229 / NCIMB 8711 / NCTC 7292 / S-41).